The chain runs to 394 residues: MSGPSRTQRPMSPLRAFFHHETSAGLVLMACALAAIAVANSPLAPGYFATLHAYAGPLSVQHWVNDGLMAVFFLLVGLEIKREILTGQLATWGKRTLPGVAAVGGMAIPGIVYVMLNLNNPDALRGWAIPAATDIAFALGVMSLLGSRVPSSLKIFLAALAIIDDLGAVIIIAIFYTANINVATLLGAVFVFGILRSLCAANFQDLRIYLALGAVLWVLLLVSGVHATLAGVLLALTIPITTASATPDPSRQTAPLHRLESLLHAPVAFAILPIFGFANAGVSFASITPAIMTDTLAVGVAAGLLIGKVVGIFGAVALMVRLRLAELPTHATWLQVLGVAFLCGIGFTMSLFIGLLAFEDPHMQDRVKYGILAGSLLAGVLGYGILRIAGRRAL.

The next 11 membrane-spanning stretches (helical) occupy residues 24–44, 58–78, 96–116, 126–146, 155–175, 180–200, 214–234, 267–287, 300–320, 336–356, and 370–390; these read AGLVLMACALAAIAVANSPLA, LSVQHWVNDGLMAVFFLLVGL, TLPGVAAVGGMAIPGIVYVML, GWAIPAATDIAFALGVMSLLG, IFLAALAIIDDLGAVIIIAIF, INVATLLGAVFVFGILRSLCA, AVLWVLLLVSGVHATLAGVLL, VAFAILPIFGFANAGVSFASI, VAAGLLIGKVVGIFGAVALMV, VLGVAFLCGIGFTMSLFIGLL, and GILAGSLLAGVLGYGILRIAG.

It belongs to the NhaA Na(+)/H(+) (TC 2.A.33) antiporter family.

The protein localises to the cell inner membrane. The catalysed reaction is Na(+)(in) + 2 H(+)(out) = Na(+)(out) + 2 H(+)(in). In terms of biological role, na(+)/H(+) antiporter that extrudes sodium in exchange for external protons. The chain is Na(+)/H(+) antiporter NhaA from Azorhizobium caulinodans (strain ATCC 43989 / DSM 5975 / JCM 20966 / LMG 6465 / NBRC 14845 / NCIMB 13405 / ORS 571).